The following is a 196-amino-acid chain: Transcriptional regulatory protein UhpA (196 aa).

A Response regulatory domain is found at 3-116; sequence TVALIDDHLI…ELIAAVHTVA (114 aa). A 4-aspartylphosphate modification is found at Asp54. The HTH luxR-type domain maps to 131–196; that stretch reads ASGRQDPLTK…ELARRMFDGW (66 aa). Residues 155–174 constitute a DNA-binding region (H-T-H motif); the sequence is VKEIAAELGLSPKTVHVHRA.

Phosphorylated and dephosphorylated by UhpB.

It localises to the cytoplasm. Its activity is regulated as follows. Phosphorylation by UhpB enhances DNA binding activity. In terms of biological role, part of the UhpABC signaling cascade that controls the expression of the hexose phosphate transporter UhpT. Activates the transcription of the uhpT gene. Acts by binding specifically to the uhpT promoter region. The polypeptide is Transcriptional regulatory protein UhpA (uhpA) (Escherichia coli (strain K12)).